Reading from the N-terminus, the 135-residue chain is Probable histone H2A.8 (135 aa).

The protein belongs to the histone H2A family. As to quaternary structure, the nucleosome is a histone octamer containing two molecules each of H2A, H2B, H3 and H4 assembled in one H3-H4 heterotetramer and two H2A-H2B heterodimers. The octamer wraps approximately 147 bp of DNA.

It is found in the nucleus. It localises to the chromosome. Its function is as follows. Core component of nucleosome. Nucleosomes wrap and compact DNA into chromatin, limiting DNA accessibility to the cellular machineries which require DNA as a template. Histones thereby play a central role in transcription regulation, DNA repair, DNA replication and chromosomal stability. DNA accessibility is regulated via a complex set of post-translational modifications of histones, also called histone code, and nucleosome remodeling. The chain is Probable histone H2A.8 from Oryza sativa subsp. indica (Rice).